The sequence spans 226 residues: 3-isopropylmalate dehydratase small subunit (226 aa).

The disordered stretch occupies residues 204–226 (EAETVESAREPEAVEWAGPLADR).

The protein belongs to the LeuD family. LeuD type 1 subfamily. Heterodimer of LeuC and LeuD.

The catalysed reaction is (2R,3S)-3-isopropylmalate = (2S)-2-isopropylmalate. The protein operates within amino-acid biosynthesis; L-leucine biosynthesis; L-leucine from 3-methyl-2-oxobutanoate: step 2/4. Its function is as follows. Catalyzes the isomerization between 2-isopropylmalate and 3-isopropylmalate, via the formation of 2-isopropylmaleate. This Bifidobacterium animalis subsp. lactis (strain AD011) protein is 3-isopropylmalate dehydratase small subunit.